Here is a 101-residue protein sequence, read N- to C-terminus: ATP synthase subunit c (101 aa).

2 helical membrane-spanning segments follow: residues 28–48 and 72–92; these read SVVAAGVGLGLAALGGAVGMG and MFIALAMIEAQVIYTLVIALI.

It belongs to the ATPase C chain family. In terms of assembly, F-type ATPases have 2 components, F(1) - the catalytic core - and F(0) - the membrane proton channel. F(1) has five subunits: alpha(3), beta(3), gamma(1), delta(1), epsilon(1). F(0) has three main subunits: a(1), b(2) and c(10-14). The alpha and beta chains form an alternating ring which encloses part of the gamma chain. F(1) is attached to F(0) by a central stalk formed by the gamma and epsilon chains, while a peripheral stalk is formed by the delta and b chains.

The protein resides in the cell inner membrane. F(1)F(0) ATP synthase produces ATP from ADP in the presence of a proton or sodium gradient. F-type ATPases consist of two structural domains, F(1) containing the extramembraneous catalytic core and F(0) containing the membrane proton channel, linked together by a central stalk and a peripheral stalk. During catalysis, ATP synthesis in the catalytic domain of F(1) is coupled via a rotary mechanism of the central stalk subunits to proton translocation. Functionally, key component of the F(0) channel; it plays a direct role in translocation across the membrane. A homomeric c-ring of between 10-14 subunits forms the central stalk rotor element with the F(1) delta and epsilon subunits. The protein is ATP synthase subunit c of Sulfurovum sp. (strain NBC37-1).